We begin with the raw amino-acid sequence, 319 residues long: RNA polymerase II holoenzyme cyclin-like subunit (319 aa).

The Cyclin N-terminal domain occupies 53–142 (QQLIRLAKRL…LGECEFFMIS (90 aa)). Over residues 237–251 (QGQQAQGGMPEPAAA) the composition is skewed to low complexity. Residues 237–261 (QGQQAQGGMPEPAAAEPKEKRQQDR) are disordered. Residues 252 to 261 (EPKEKRQQDR) are compositionally biased toward basic and acidic residues.

This sequence belongs to the cyclin family. Cyclin C subfamily. As to quaternary structure, component of the SRB8-11 complex, a regulatory module of the Mediator complex. Interacts with SSN3/FCK1.

It is found in the nucleus. In terms of biological role, component of the SRB8-11 complex. The SRB8-11 complex is a regulatory module of the Mediator complex which is itself involved in regulation of basal and activated RNA polymerase II-dependent transcription. The SRB8-11 complex may be involved in the transcriptional repression of a subset of genes regulated by Mediator. It may inhibit the association of the Mediator complex with RNA polymerase II to form the holoenzyme complex. The SRB8-11 complex phosphorylates the C-terminal domain (CTD) of the largest subunit of RNA polymerase II. May play a role in signal transduction pathways regulating secondary metabolism and fungal development (conidiation). In Gibberella moniliformis (Maize ear and stalk rot fungus), this protein is RNA polymerase II holoenzyme cyclin-like subunit (SSN8).